A 173-amino-acid chain; its full sequence is Adenine phosphoribosyltransferase (173 aa).

The protein belongs to the purine/pyrimidine phosphoribosyltransferase family. In terms of assembly, homodimer.

It is found in the cytoplasm. It carries out the reaction AMP + diphosphate = 5-phospho-alpha-D-ribose 1-diphosphate + adenine. It participates in purine metabolism; AMP biosynthesis via salvage pathway; AMP from adenine: step 1/1. Catalyzes a salvage reaction resulting in the formation of AMP, that is energically less costly than de novo synthesis. The sequence is that of Adenine phosphoribosyltransferase from Listeria monocytogenes serovar 1/2a (strain ATCC BAA-679 / EGD-e).